A 275-amino-acid chain; its full sequence is NADPH-dependent 7-cyano-7-deazaguanine reductase (275 aa).

81–83 (IES) contacts substrate. 83 to 84 (SK) is an NADPH binding site. The active-site Thioimide intermediate is Cys-181. The Proton donor role is filled by Asp-188. 220–221 (HE) is a binding site for substrate. Residue 249-250 (RG) participates in NADPH binding.

It belongs to the GTP cyclohydrolase I family. QueF type 2 subfamily. In terms of assembly, homodimer.

The protein resides in the cytoplasm. It catalyses the reaction 7-aminomethyl-7-carbaguanine + 2 NADP(+) = 7-cyano-7-deazaguanine + 2 NADPH + 3 H(+). It functions in the pathway tRNA modification; tRNA-queuosine biosynthesis. In terms of biological role, catalyzes the NADPH-dependent reduction of 7-cyano-7-deazaguanine (preQ0) to 7-aminomethyl-7-deazaguanine (preQ1). This chain is NADPH-dependent 7-cyano-7-deazaguanine reductase, found in Xylella fastidiosa (strain M12).